The following is a 367-amino-acid chain: Alginate lyase (367 aa).

The signal sequence occupies residues 1–27 (MKTSHLIRITLPGALAAALLASQVSQA). Residues 65 to 66 (SK), 138 to 139 (HT), and tyrosine 256 contribute to the substrate site.

The protein belongs to the polysaccharide lyase 5 family.

Its subcellular location is the periplasm. It catalyses the reaction Eliminative cleavage of alginate to give oligosaccharides with 4-deoxy-alpha-L-erythro-hex-4-enuronosyl groups at their non-reducing ends and beta-D-mannuronate at their reducing end.. Catalyzes the depolymerization of alginate by cleaving the beta-1,4 glycosidic bond between two adjacent sugar residues via a beta-elimination mechanism. May serve to degrade mislocalized alginate that is trapped in the periplasmic space. This chain is Alginate lyase, found in Pseudomonas paraeruginosa (strain DSM 24068 / PA7) (Pseudomonas aeruginosa (strain PA7)).